The following is a 436-amino-acid chain: Trigger factor (436 aa).

The PPIase FKBP-type domain occupies 161-255 (DDVAIIDFKT…VKEVREKQLP (95 aa)).

It belongs to the FKBP-type PPIase family. Tig subfamily.

It localises to the cytoplasm. It carries out the reaction [protein]-peptidylproline (omega=180) = [protein]-peptidylproline (omega=0). Involved in protein export. Acts as a chaperone by maintaining the newly synthesized protein in an open conformation. Functions as a peptidyl-prolyl cis-trans isomerase. In Akkermansia muciniphila (strain ATCC BAA-835 / DSM 22959 / JCM 33894 / BCRC 81048 / CCUG 64013 / CIP 107961 / Muc), this protein is Trigger factor.